The chain runs to 1003 residues: Pumilio homolog 4 (1003 aa).

A disordered region spans residues 38–65; sequence QHRNQQSFGRERERDIDVHRSGSAPPTV. Residues 46 to 57 show a composition bias toward basic and acidic residues; the sequence is GRERERDIDVHR. Serine 225 carries the phosphoserine modification. Residues 285–300 show a composition bias toward polar residues; that stretch reads KNSPNTMLGSTMSSPV. The tract at residues 285-328 is disordered; the sequence is KNSPNTMLGSTMSSPVPRNRTPDSHLVGRSTASGLPPIGTRVGP. Residue threonine 305 is modified to Phosphothreonine. Residues 644–984 form the PUM-HD domain; sequence AEASLLEGFK…HIVARVEKLI (341 aa). Pumilio repeat units lie at residues 664–699, 700–735, 736–771, 772–807, 808–843, 845–880, 881–916, and 917–958; these read EIVG…AIFP, EILP…ELAE, QVTG…RMVK, ELDG…FIIS, SFYG…RIIM, EIMD…EIIN, KLAG…VLVN, and EMLG…LILS.

The protein resides in the cytoplasm. Sequence-specific RNA-binding protein that regulates translation and mRNA stability by binding the 3'-UTR of target mRNAs. Binds the APUM-binding elements (APBEs) in the 3'-UTR mRNA sequence of CLV1, PNH, WUS and FAS2. The sequence is that of Pumilio homolog 4 (APUM4) from Arabidopsis thaliana (Mouse-ear cress).